A 236-amino-acid polypeptide reads, in one-letter code: 7-cyano-7-deazaguanine synthase (236 aa).

7 to 17 (CSGGLDSVSLA) is an ATP binding site. The Zn(2+) site is built by cysteine 185, cysteine 193, cysteine 196, and cysteine 199.

It belongs to the QueC family. Zn(2+) serves as cofactor.

It carries out the reaction 7-carboxy-7-deazaguanine + NH4(+) + ATP = 7-cyano-7-deazaguanine + ADP + phosphate + H2O + H(+). It functions in the pathway purine metabolism; 7-cyano-7-deazaguanine biosynthesis. Its function is as follows. Catalyzes the ATP-dependent conversion of 7-carboxy-7-deazaguanine (CDG) to 7-cyano-7-deazaguanine (preQ(0)). This Rhizobium leguminosarum bv. trifolii (strain WSM2304) protein is 7-cyano-7-deazaguanine synthase.